A 202-amino-acid polypeptide reads, in one-letter code: Guanylate kinase (202 aa).

The Guanylate kinase-like domain maps to 3 to 181 (GNLFVVAAPS…ALDDLRAVVR (179 aa)). 10–17 (APSGAGKT) provides a ligand contact to ATP.

The protein belongs to the guanylate kinase family.

It localises to the cytoplasm. The catalysed reaction is GMP + ATP = GDP + ADP. In terms of biological role, essential for recycling GMP and indirectly, cGMP. This Dechloromonas aromatica (strain RCB) protein is Guanylate kinase.